Consider the following 247-residue polypeptide: Probable phosphatase Shew_1420 (247 aa).

Residues histidine 8, histidine 10, histidine 16, histidine 41, glutamate 74, histidine 102, histidine 132, aspartate 193, and histidine 195 each contribute to the Zn(2+) site.

The protein belongs to the PHP family. Zn(2+) is required as a cofactor.

The polypeptide is Probable phosphatase Shew_1420 (Shewanella loihica (strain ATCC BAA-1088 / PV-4)).